A 415-amino-acid polypeptide reads, in one-letter code: Mulatexin (415 aa).

Residues 1–21 form the signal peptide; it reads MKFRTLLIIFSLVFLLEIVSA. A Chitin-binding type-1 1 domain is found at 23 to 66; it reads EPQCGRDAGGALCHGNLCCSHWGFCGTTAIYCDVDQGCQSQCWS. Cystine bridges form between cysteine 26/cysteine 41, cysteine 35/cysteine 47, cysteine 40/cysteine 54, and cysteine 60/cysteine 64. The tract at residues 65 to 127 is disordered; the sequence is WSSPPPPSPP…PGGPERPDHR (63 aa). Pro residues predominate over residues 67 to 121; that stretch reads SPPPPSPPPPPPSPPPPSPPPPSPPPPSPPPPSPPPPSPPPPSPPPPSPPPPGGP. The Chitin-binding type-1 2 domain maps to 125–167; it reads DHRCGRALGNPPCNPGRCCSIHNWCGSTAAYCRGSSCQYQCWN. Cystine bridges form between cysteine 128–cysteine 143, cysteine 137–cysteine 149, cysteine 142–cysteine 156, and cysteine 161–cysteine 165. The N-linked (GlcNAc...) asparagine glycan is linked to asparagine 264.

Post-translationally, glycosylated.

It localises to the secreted. Its function is as follows. Chitin-binding protein which slows larval growth when consumed by the lepidopteran species S.ricini and M.brassica, but not when consumed by the mulberry specialist B.mori. Lacks chitinase activity. The sequence is that of Mulatexin from Morus alba (White mulberry).